The sequence spans 167 residues: Heme-degrading monooxygenase (167 aa).

The tract at residues 1-50 is important for catalysis; sequence MKKVFITTGTEHYLRQLMANYTGGNVTLLQNFSQSLLYQESTGEKLFQEG. The 88-residue stretch at 67–154 folds into the ABM domain; sequence VVVFEYIHLR…NNTQSGFSHE (88 aa).

Belongs to the antibiotic biosynthesis monooxygenase family. Monomer.

It localises to the cytoplasm. Catalyzes the degradation of heme to biliverdin in the presence of a suitable electron donor such as ascorbate, with the subsequent release of iron. Hardly any CO is released by the heme degradation reaction. Binds heme. Allows bacterial pathogens to use the host heme as an iron source. Release of iron from heme may play a crucial role in the pathogenicity of L.monocytogenes. The sequence is that of Heme-degrading monooxygenase from Listeria monocytogenes serovar 1/2a (strain ATCC BAA-679 / EGD-e).